The primary structure comprises 466 residues: Cysteine--tRNA ligase (466 aa).

Residue C29 coordinates Zn(2+). A 'HIGH' region motif is present at residues 31–41 (PTVYNYIHIGN). Positions 209, 234, and 238 each coordinate Zn(2+). The 'KMSKS' region motif lies at 266–270 (KMSKS). K269 provides a ligand contact to ATP. S270 is subject to Phosphoserine.

The protein belongs to the class-I aminoacyl-tRNA synthetase family. Monomer. It depends on Zn(2+) as a cofactor.

It is found in the cytoplasm. It carries out the reaction tRNA(Cys) + L-cysteine + ATP = L-cysteinyl-tRNA(Cys) + AMP + diphosphate. The chain is Cysteine--tRNA ligase from Bacillus pumilus (strain SAFR-032).